A 416-amino-acid polypeptide reads, in one-letter code: CinA-like protein (416 aa).

The protein belongs to the CinA family.

This is CinA-like protein from Nostoc punctiforme (strain ATCC 29133 / PCC 73102).